We begin with the raw amino-acid sequence, 177 residues long: Probasin (177 aa).

The N-terminal stretch at 1 to 17 is a signal peptide; that stretch reads MRVILLLLTLDVLGVSS. Cysteine 79 and cysteine 170 are disulfide-bonded.

The protein belongs to the calycin superfamily. Lipocalin family. Prostatic epithelial cells.

It is found in the nucleus. It localises to the secreted. The protein is Probasin (Pbsn) of Rattus norvegicus (Rat).